A 180-amino-acid polypeptide reads, in one-letter code: Ribosome-recycling factor (180 aa).

The tract at residues 135–156 is disordered; sequence SDLKKDNDLSEDSRHRTEDDIQ.

This sequence belongs to the RRF family.

The protein resides in the cytoplasm. Functionally, responsible for the release of ribosomes from messenger RNA at the termination of protein biosynthesis. May increase the efficiency of translation by recycling ribosomes from one round of translation to another. This Oenococcus oeni (strain ATCC BAA-331 / PSU-1) protein is Ribosome-recycling factor.